A 92-amino-acid polypeptide reads, in one-letter code: Small ribosomal subunit protein uS19 (92 aa).

This sequence belongs to the universal ribosomal protein uS19 family.

Functionally, protein S19 forms a complex with S13 that binds strongly to the 16S ribosomal RNA. In Mesorhizobium japonicum (strain LMG 29417 / CECT 9101 / MAFF 303099) (Mesorhizobium loti (strain MAFF 303099)), this protein is Small ribosomal subunit protein uS19.